The sequence spans 460 residues: Cysteine--tRNA ligase (460 aa).

Cys-28 contacts Zn(2+). The short motif at 30-40 is the 'HIGH' region element; sequence MTVYDYCHLGH. Positions 209, 234, and 238 each coordinate Zn(2+). Positions 266–270 match the 'KMSKS' region motif; it reads KMSKS. Lys-269 is an ATP binding site.

The protein belongs to the class-I aminoacyl-tRNA synthetase family. As to quaternary structure, monomer. Requires Zn(2+) as cofactor.

It is found in the cytoplasm. It catalyses the reaction tRNA(Cys) + L-cysteine + ATP = L-cysteinyl-tRNA(Cys) + AMP + diphosphate. The polypeptide is Cysteine--tRNA ligase (Pseudomonas entomophila (strain L48)).